The following is a 147-amino-acid chain: uncharacterized protein (147 aa).

Positions 4–120 constitute a CMP/dCMP-type deaminase domain; it reads KWAKRFFQMA…EQTEDFLSRW (117 aa). A Zn(2+)-binding site is contributed by histidine 67. The active-site Proton donor is the glutamate 69. Cysteine 92 and cysteine 95 together coordinate Zn(2+).

This sequence belongs to the cytidine and deoxycytidylate deaminase family. Zn(2+) serves as cofactor.

This is an uncharacterized protein from Aliivibrio fischeri (Vibrio fischeri).